We begin with the raw amino-acid sequence, 450 residues long: Perilipin-2 (450 aa).

An N-acetylalanine modification is found at Ala-2. Ser-215 is subject to Phosphoserine. Position 232 is a phosphotyrosine (Tyr-232). The segment at 411 to 450 (ESESAQAPGTTRRPGRWSRKHPKPVPVSNAEGSQPDDSSS) is disordered. The segment covering 423-433 (RPGRWSRKHPK) has biased composition (basic residues). Polar residues predominate over residues 440–450 (AEGSQPDDSSS).

It belongs to the perilipin family. In terms of assembly, interacts with IRGC. Acylated; primarily with C14, C16 and C18 fatty acids. Post-translationally, phosphorylation at Tyr-232 by isoform 1 of CHKA (CHKalpha2) promotes dissociation from lipid droplets: dissociation is followed by recruitment of autophagosome machinery to lipid droplets and subsequent lipid droplet lipolysis. In terms of processing, polyubiquitination of Nt-acetylatable A-PLIN2 by MARCHF6 lead to degradation by 26S proteasomes. In terms of tissue distribution, milk lipid globules.

Its subcellular location is the membrane. It localises to the lipid droplet. Structural component of lipid droplets, which is required for the formation and maintenance of lipid storage droplets. The chain is Perilipin-2 (PLIN2) from Bos taurus (Bovine).